Reading from the N-terminus, the 423-residue chain is UDP-N-acetylglucosamine 1-carboxyvinyltransferase 1 (423 aa).

23–24 (KN) serves as a coordination point for phosphoenolpyruvate. Arg96 lines the UDP-N-acetyl-alpha-D-glucosamine pocket. Cys120 (proton donor) is an active-site residue. 2-(S-cysteinyl)pyruvic acid O-phosphothioketal is present on Cys120. UDP-N-acetyl-alpha-D-glucosamine contacts are provided by residues 125–129 (RPIDL), Asp309, and Val331.

Belongs to the EPSP synthase family. MurA subfamily.

It localises to the cytoplasm. The catalysed reaction is phosphoenolpyruvate + UDP-N-acetyl-alpha-D-glucosamine = UDP-N-acetyl-3-O-(1-carboxyvinyl)-alpha-D-glucosamine + phosphate. It functions in the pathway cell wall biogenesis; peptidoglycan biosynthesis. Its function is as follows. Cell wall formation. Adds enolpyruvyl to UDP-N-acetylglucosamine. In Streptococcus thermophilus (strain CNRZ 1066), this protein is UDP-N-acetylglucosamine 1-carboxyvinyltransferase 1.